The sequence spans 131 residues: Probable histone H2A.3 (131 aa).

The tract at residues 1–23 (MAGRGKQLGSGAAKKSTSRSSKA) is disordered. Residues 9–23 (GSGAAKKSTSRSSKA) are compositionally biased toward low complexity.

It belongs to the histone H2A family. In terms of assembly, the nucleosome is a histone octamer containing two molecules each of H2A, H2B, H3 and H4 assembled in one H3-H4 heterotetramer and two H2A-H2B heterodimers. The octamer wraps approximately 147 bp of DNA. In terms of processing, not ubiquitinated. As to expression, expressed in meristems and dividing cells.

It is found in the nucleus. Its subcellular location is the chromosome. Functionally, core component of nucleosome. Nucleosomes wrap and compact DNA into chromatin, limiting DNA accessibility to the cellular machineries which require DNA as a template. Histones thereby play a central role in transcription regulation, DNA repair, DNA replication and chromosomal stability. DNA accessibility is regulated via a complex set of post-translational modifications of histones, also called histone code, and nucleosome remodeling. In Arabidopsis thaliana (Mouse-ear cress), this protein is Probable histone H2A.3.